Consider the following 85-residue polypeptide: Depressant insect toxin BmK ITa1 (85 aa).

Residues 1 to 21 form the signal peptide; the sequence is MKLFLLLLISASMLIDGLVNA. An LCN-type CS-alpha/beta domain is found at 22–82; sequence DGYIRGSNGC…TWKSESNTCG (61 aa). 4 disulfides stabilise this stretch: C31/C81, C35/C56, C42/C63, and C46/C65. Position 82 is a glycine amide (G82).

It belongs to the long (4 C-C) scorpion toxin superfamily. Sodium channel inhibitor family. Beta subfamily. In terms of tissue distribution, expressed by the venom gland.

It localises to the secreted. Depressant insect toxins cause a transient contraction paralysis followed by a slow flaccid paralysis. They bind voltage-independently to sodium channels (Nav) and block action potentials, primarily by depolarizing the axonal membrane and suppressing the sodium current. In Olivierus martensii (Manchurian scorpion), this protein is Depressant insect toxin BmK ITa1.